The sequence spans 183 residues: NEDD8-conjugating enzyme Ubc12 (183 aa).

Position 1 is an N-acetylmethionine (Met1). Residues 1 to 29 are disordered; that stretch reads MIKLFSLKQQKKEEESAGGTKGSSKKASA. Residues 1 to 57 form an interaction with UBA3 region; the sequence is MIKLFSLKQQKKEEESAGGTKGSSKKASAAQLRIQKDINELNLPKTCDISFSDPDDL. Position 3 is an N6-acetyllysine (Lys3). The 145-residue stretch at 29 to 173 folds into the UBC core domain; that stretch reads AAQLRIQKDI…VQRSMRGGYI (145 aa). Position 50 is a phosphoserine (Ser50). Cys111 acts as the Glycyl thioester intermediate in catalysis. The residue at position 169 (Arg169) is an Asymmetric dimethylarginine; alternate. At Arg169 the chain carries Omega-N-methylarginine; alternate.

The protein belongs to the ubiquitin-conjugating enzyme family. UBC12 subfamily. As to quaternary structure, interacts with UBA3 and RBX1. Interacts (N-terminally acetylated form) with (via DCUN1 domain) DCUN1D1, DCUN1D2, DCUN1D3, DCUN1D4 and DCUN1D5. In terms of processing, the acetylation of Met-1 increases affinity for DCUN1D1 by about 2 orders of magnitude and is crucial for NEDD8 transfer to cullins.

It catalyses the reaction [E1 NEDD8-activating enzyme]-S-[NEDD8 protein]-yl-L-cysteine + [E2 NEDD8-conjugating enzyme]-L-cysteine = [E1 NEDD8-activating enzyme]-L-cysteine + [E2 NEDD8-conjugating enzyme]-S-[NEDD8-protein]-yl-L-cysteine.. The protein operates within protein modification; protein neddylation. Accepts the ubiquitin-like protein NEDD8 from the UBA3-NAE1 E1 complex and catalyzes its covalent attachment to other proteins. The specific interaction with the E3 ubiquitin ligase RBX1, but not RBX2, suggests that the RBX1-UBE2M complex neddylates specific target proteins, such as CUL1, CUL2, CUL3 and CUL4. Involved in cell proliferation. This chain is NEDD8-conjugating enzyme Ubc12 (Ube2m), found in Mus musculus (Mouse).